The sequence spans 110 residues: uncharacterized protein (110 aa).

The protein belongs to the HesB/IscA family.

This is an uncharacterized protein from Rickettsia prowazekii (strain Madrid E).